The following is a 70-amino-acid chain: UPF0426 protein ssl0294 (70 aa).

It belongs to the UPF0426 family.

The sequence is that of UPF0426 protein ssl0294 from Synechocystis sp. (strain ATCC 27184 / PCC 6803 / Kazusa).